Consider the following 202-residue polypeptide: Protein GrpE (202 aa).

Polar residues predominate over residues 1–14 (MENTQENPTSQNPT). Positions 1 to 58 (MENTQENPTSQNPTPADEAARQAAEAASGEPQDQARQPAAAAGEQPAQAQPAGAEAAL) are disordered. A compositionally biased stretch (low complexity) spans 21–58 (RQAAEAASGEPQDQARQPAAAAGEQPAQAQPAGAEAAL).

The protein belongs to the GrpE family. In terms of assembly, homodimer.

Its subcellular location is the cytoplasm. Participates actively in the response to hyperosmotic and heat shock by preventing the aggregation of stress-denatured proteins, in association with DnaK and GrpE. It is the nucleotide exchange factor for DnaK and may function as a thermosensor. Unfolded proteins bind initially to DnaJ; upon interaction with the DnaJ-bound protein, DnaK hydrolyzes its bound ATP, resulting in the formation of a stable complex. GrpE releases ADP from DnaK; ATP binding to DnaK triggers the release of the substrate protein, thus completing the reaction cycle. Several rounds of ATP-dependent interactions between DnaJ, DnaK and GrpE are required for fully efficient folding. This is Protein GrpE from Paraburkholderia phymatum (strain DSM 17167 / CIP 108236 / LMG 21445 / STM815) (Burkholderia phymatum).